We begin with the raw amino-acid sequence, 194 residues long: Putative manganese efflux pump MntP (194 aa).

The next 6 helical transmembrane spans lie at 3–23 (PITI…AAIG), 37–57 (LYVA…GWLL), 65–85 (IAAF…IHMI), 112–132 (LAAT…SLAF), 137–157 (IGIV…FGVM), and 170–190 (AEIV…YEHL).

The protein belongs to the MntP (TC 9.B.29) family.

The protein localises to the cell inner membrane. Functionally, probably functions as a manganese efflux pump. In Xylella fastidiosa (strain M12), this protein is Putative manganese efflux pump MntP.